Reading from the N-terminus, the 550-residue chain is Carnitine transporter (550 aa).

The next 12 helical transmembrane spans lie at 15–35 (FLAVTSLLFVFISVAGLAIYS), 53–73 (FTTPVLLFAFLAIIFTFGLAF), 92–112 (SWIFMFILSGIGSSTLYWGFL), 137–157 (VAYSFFHSGLSAWAIYALASI), 196–216 (MFLLCMFGALTISLVLTAVTF), 230–250 (FMTKVIIILAVSVLFALSSYV), 263–283 (VCLGVVLFAIYVLCFGPTQFI), 317–337 (WTVFYWLWWISYAPGVALFVT), 347–367 (EVIFAMVIGGSVGLWFIFGVF), 401–421 (LLPAGKLMMWIFLGIMVVFLA), 451–471 (LFWCVMLTLVPIAMIFSKAPL), and 477–497 (ATIVTALPFIVIILIQTYGLV).

This sequence belongs to the BCCT transporter (TC 2.A.15) family.

The protein localises to the cell inner membrane. Its activity is regulated as follows. Inhibited by the protonophore 3,3',4',5-tetrachlorosalicylanilide (TCS). Not activated by osmolarity. Its function is as follows. Catalyzes the energy-dependent uptake of carnitine and is essential for growth on carnitine. Can also mediate the uptake of choline. Is probably a proton:substrate symporter. The polypeptide is Carnitine transporter (Acinetobacter baumannii (strain ATCC 19606 / DSM 30007 / JCM 6841 / CCUG 19606 / CIP 70.34 / NBRC 109757 / NCIMB 12457 / NCTC 12156 / 81)).